The following is a 334-amino-acid chain: UDP-N-acetylglucosamine 4,6-dehydratase (inverting) (334 aa).

NADP(+)-binding positions include 13–16 (TGSF), 37–42 (SRDELK), 61–62 (DV), Ala81, Lys85, and 123–124 (LS). Position 85 (Lys85) interacts with substrate. Lys127 is a catalytic residue. Residues Tyr135 and Lys139 each coordinate NADP(+). A substrate-binding site is contributed by Asn167. Residue 168 to 172 (VVGSR) coordinates NADP(+). The substrate site is built by Val175, Thr193, Arg252, and Glu255.

It belongs to the polysaccharide synthase family. Homohexamer. NADP(+) serves as cofactor.

It carries out the reaction UDP-N-acetyl-alpha-D-glucosamine = UDP-2-acetamido-2,6-dideoxy-beta-L-arabino-hex-4-ulose + H2O. Its function is as follows. Catalyzes the first step in the biosynthesis of pseudaminic acid, a sialic-acid-like sugar that is used to modify flagellin. Has both C6 dehydratase and C5 epimerase activities that result in the production of both UDP-2-acetamido-2,6-dideoxy-beta-L-arabino-4-hexulose and UDP-2-acetamido-2,6-dideoxy-alpha-D-xylo-4-hexulose. This Campylobacter jejuni subsp. jejuni serotype O:23/36 (strain 81-176) protein is UDP-N-acetylglucosamine 4,6-dehydratase (inverting) (pseB).